Consider the following 1143-residue polypeptide: Disease resistance protein Piks-1 (1143 aa).

The structured coiled coil (CC) domain stretch occupies residues Met1 to Gln190. The HMA domain maps to Met189–Val258. The HMA-like domain stretch occupies residues Lys191 to Asp264. Residues His282–Glu570 enclose the NB-ARC domain. LRR repeat units lie at residues Phe681 to Gln706, Ser708 to Leu731, Lys732 to Leu754, His756 to Leu777, Gln778 to Leu800, Asn802 to Leu823, Asn824 to Gln848, Met945 to Thr968, Asp979 to Phe1002, and Ala1004 to Cys1027.

This sequence belongs to the disease resistance NB-LRR family. In terms of assembly, interacts with AVR-Pik through its N-terminal part containing the HMA-like domain.

Its function is as follows. Disease resistance (R) protein that specifically recognizes the AVR-Pik effector avirulence protein from M.oryzae. Resistance proteins guard the plant against pathogens that contain an appropriate avirulence protein via an indirect interaction with this avirulence protein. That triggers a defense system including the hypersensitive response, which restricts the pathogen growth. This is Disease resistance protein Piks-1 from Oryza sativa subsp. japonica (Rice).